Reading from the N-terminus, the 615-residue chain is Nitrogen permease regulator 2 (615 aa).

Low complexity predominate over residues 143–167 (STTTPSTAGPSSTPNPSSNTTPTHP). 3 disordered regions span residues 143 to 176 (STTT…TKDM), 354 to 398 (SLGS…QNSS), and 527 to 551 (SATG…VSFE). The residue at position 362 (Ser362) is a Phosphoserine. Low complexity predominate over residues 373–398 (SSSIPSNPDSRTTSFSSTSRVSQNSS). The segment covering 527 to 539 (SATGSRNTAQSGN) has biased composition (polar residues).

Belongs to the NPR2 family. Component of the SEA complex composed of at least IML1/SEA1, RTC1/SEA2, MTC5/SEA3, NPR2, NPR3, SEA4, SEC13 and SEH1. Forms a heterodimer with NPR3.

It is found in the vacuole membrane. In terms of biological role, component of the SEA complex which coats the vacuolar membrane and is involved in intracellular trafficking, autophagy, response to nitrogen starvation, and amino acid biogenesis. Mediates inactivation of the TORC1 complex in response to amino acid starvation. Post-transcriptional regulator of nitrogen permeases. May be involved in putative NPR1-dependent phosphorylation of nitrogen permeases or in the processing and targeting of nitrogen permeases at the level of the endoplasmic reticulum. The protein is Nitrogen permease regulator 2 (NPR2) of Saccharomyces cerevisiae (strain ATCC 204508 / S288c) (Baker's yeast).